The chain runs to 199 residues: Proteasome subunit beta type-2 (199 aa).

This sequence belongs to the peptidase T1B family. The 26S proteasome consists of a 20S proteasome core and two 19S regulatory subunits. The 20S proteasome core is composed of 28 subunits that are arranged in four stacked rings, resulting in a barrel-shaped structure. The two end rings are each formed by seven alpha subunits, and the two central rings are each formed by seven beta subunits. The catalytic chamber with the active sites is on the inside of the barrel.

It is found in the cytoplasm. The protein localises to the nucleus. Its function is as follows. Non-catalytic component of the proteasome, a multicatalytic proteinase complex which is characterized by its ability to cleave peptides with Arg, Phe, Tyr, Leu, and Glu adjacent to the leaving group at neutral or slightly basic pH. The proteasome has an ATP-dependent proteolytic activity. The chain is Proteasome subunit beta type-2 (pbs-4) from Caenorhabditis elegans.